The following is an 89-amino-acid chain: Cytochrome c oxidase subunit 7A, mitochondrial (89 aa).

The transit peptide at 1 to 31 directs the protein to the mitochondrion; that stretch reads MMNLSRAVVRSFATTAGRRSAAVPKDQIEKG. Residues 32–58 are Mitochondrial matrix-facing; sequence YFEIRKVQEHFQKKDGKPVFLKGSVVD. A helical transmembrane segment spans residues 59–81; it reads NVLYRVTVALALVGIGGMGKLFY. Residues 82-89 lie on the Mitochondrial intermembrane side of the membrane; the sequence is ELSVPKKE.

The protein belongs to the cytochrome c oxidase VIIa family. Component of the cytochrome c oxidase (complex IV, CIV), a multisubunit enzyme composed of a catalytic core of 3 subunits and several supernumerary subunits. The complex exists as a monomer or a dimer and forms supercomplexes (SCs) in the inner mitochondrial membrane with ubiquinol-cytochrome c oxidoreductase (cytochrome b-c1 complex, complex III, CIII).

Its subcellular location is the mitochondrion inner membrane. It functions in the pathway energy metabolism; oxidative phosphorylation. Its function is as follows. Component of the cytochrome c oxidase, the last enzyme in the mitochondrial electron transport chain which drives oxidative phosphorylation. The respiratory chain contains 3 multisubunit complexes succinate dehydrogenase (complex II, CII), ubiquinol-cytochrome c oxidoreductase (cytochrome b-c1 complex, complex III, CIII) and cytochrome c oxidase (complex IV, CIV), that cooperate to transfer electrons derived from NADH and succinate to molecular oxygen, creating an electrochemical gradient over the inner membrane that drives transmembrane transport and the ATP synthase. Cytochrome c oxidase is the component of the respiratory chain that catalyzes the reduction of oxygen to water. Electrons originating from reduced cytochrome c in the intermembrane space (IMS) are transferred via the dinuclear copper A center (CU(A)) of subunit 2 and heme A of subunit 1 to the active site in subunit 1, a binuclear center (BNC) formed by heme A3 and copper B (CU(B)). The BNC reduces molecular oxygen to 2 water molecules using 4 electrons from cytochrome c in the IMS and 4 protons from the mitochondrial matrix. This chain is Cytochrome c oxidase subunit 7A, mitochondrial, found in Drosophila melanogaster (Fruit fly).